The chain runs to 524 residues: GMP synthase [glutamine-hydrolyzing] (524 aa).

Positions 8-206 (RILILDFGSQ…IYDICGCEAL (199 aa)) constitute a Glutamine amidotransferase type-1 domain. C85 functions as the Nucleophile in the catalytic mechanism. Catalysis depends on residues H180 and E182. The region spanning 207-399 (WEPRHIIAKS…LGLPFELVYR (193 aa)) is the GMPS ATP-PPase domain. 234–240 (SGGVDSS) contributes to the ATP binding site.

Homodimer.

The catalysed reaction is XMP + L-glutamine + ATP + H2O = GMP + L-glutamate + AMP + diphosphate + 2 H(+). Its pathway is purine metabolism; GMP biosynthesis; GMP from XMP (L-Gln route): step 1/1. Functionally, catalyzes the synthesis of GMP from XMP. In Nitrosococcus oceani (strain ATCC 19707 / BCRC 17464 / JCM 30415 / NCIMB 11848 / C-107), this protein is GMP synthase [glutamine-hydrolyzing].